A 206-amino-acid polypeptide reads, in one-letter code: Transmembrane emp24 domain-containing protein bai (206 aa).

An N-terminal signal peptide occupies residues 1-20 (MLKVLYVIFTIFGYIWPIYS). Over 21–172 (VMFHLTPNTQ…RDTNEKTNSR (152 aa)) the chain is Lumenal. Residues 30–140 (QKCLKEDIQA…LKPLEVDLKR (111 aa)) enclose the GOLD domain. The helical transmembrane segment at 173 to 193 (VLFFSIFSMCCLLGLATWQVL) threads the bilayer. Residues 194–206 (YLRRYFKAKKLIE) lie on the Cytoplasmic side of the membrane.

Belongs to the EMP24/GP25L family.

It localises to the membrane. Functionally, eca and bai are essential, though not redundant, for dorsoventral patterning of the embryo. Specifically required during early embryogenesis for the activity of maternal tkv, while the zygotic tkv is not affected. This Drosophila virilis (Fruit fly) protein is Transmembrane emp24 domain-containing protein bai.